Here is a 454-residue protein sequence, read N- to C-terminus: Tubulin alpha chain (454 aa).

Residues Gln12, Asp72, Ser141, Gly145, Thr146, Thr180, Asn207, and Asn229 each contribute to the GTP site. Residue Asp72 participates in Mg(2+) binding. Glu255 is an active-site residue.

This sequence belongs to the tubulin family. Dimer of alpha and beta chains. A typical microtubule is a hollow water-filled tube with an outer diameter of 25 nm and an inner diameter of 15 nM. Alpha-beta heterodimers associate head-to-tail to form protofilaments running lengthwise along the microtubule wall with the beta-tubulin subunit facing the microtubule plus end conferring a structural polarity. Microtubules usually have 13 protofilaments but different protofilament numbers can be found in some organisms and specialized cells. Mg(2+) serves as cofactor.

Its subcellular location is the cytoplasm. It is found in the cytoskeleton. It carries out the reaction GTP + H2O = GDP + phosphate + H(+). Its function is as follows. Tubulin is the major constituent of microtubules, a cylinder consisting of laterally associated linear protofilaments composed of alpha- and beta-tubulin heterodimers. Microtubules grow by the addition of GTP-tubulin dimers to the microtubule end, where a stabilizing cap forms. Below the cap, tubulin dimers are in GDP-bound state, owing to GTPase activity of alpha-tubulin. The polypeptide is Tubulin alpha chain (TUB1) (Colletotrichum orbiculare (strain 104-T / ATCC 96160 / CBS 514.97 / LARS 414 / MAFF 240422) (Cucumber anthracnose fungus)).